The primary structure comprises 388 residues: MGILGLSKLIADLAPQAIRESEIKNFFGRKVAIDASMCLYQFLIAVRSEGAQLATVNGDPTSHLMGMFYRTIRLLDNGIKPVYVFDGKPPDLKSGELAKRAERREEAEKALKAATEAGDEAEIEKFNRRLVRVTKEHAREAKELLKLMGVPYVDAPCEAEAQCAALVKAGKVYATATEDMDALTFGSSKLLRYLTYSEARKMPVKEFTYEKLLQGLELNQREFIDLCILLGCDYCESIKGIGPKRAIELINSYRDIETILDNLDTSKYTVPENWNYKVARELFIEPEVADASAIDLKWTEPDEEGLVKFLCGERQFSEERVRGGAKKLLKSKKAQTQVRLDSFFQTLPSSPNAVAAAKRKAEEAKKSANNKKAKIGGGGGAGRGRRPK.

An N-domain region spans residues 1–104 (MGILGLSKLI…GELAKRAERR (104 aa)). Residue Asp34 participates in Mg(2+) binding. DNA-binding residues include Arg47 and Arg70. Mg(2+) contacts are provided by Asp86, Glu158, Glu160, Asp179, and Asp181. Positions 122-253 (EIEKFNRRLV…KRAIELINSY (132 aa)) are I-domain. DNA is bound at residue Glu158. DNA contacts are provided by Gly231 and Asp233. Residue Asp233 coordinates Mg(2+). The interaction with PCNA stretch occupies residues 336–344 (TQVRLDSFF). The tract at residues 355 to 388 (AAAKRKAEEAKKSANNKKAKIGGGGGAGRGRRPK) is disordered.

This sequence belongs to the XPG/RAD2 endonuclease family. FEN1 subfamily. As to quaternary structure, interacts with PCNA. Three molecules of FEN1 bind to one PCNA trimer with each molecule binding to one PCNA monomer. PCNA stimulates the nuclease activity without altering cleavage specificity. The cofactor is Mg(2+). Phosphorylated. Phosphorylation upon DNA damage induces relocalization to the nuclear plasma.

It is found in the nucleus. The protein localises to the nucleolus. The protein resides in the nucleoplasm. It localises to the mitochondrion. Functionally, structure-specific nuclease with 5'-flap endonuclease and 5'-3' exonuclease activities involved in DNA replication and repair. During DNA replication, cleaves the 5'-overhanging flap structure that is generated by displacement synthesis when DNA polymerase encounters the 5'-end of a downstream Okazaki fragment. It enters the flap from the 5'-end and then tracks to cleave the flap base, leaving a nick for ligation. Also involved in the long patch base excision repair (LP-BER) pathway, by cleaving within the apurinic/apyrimidinic (AP) site-terminated flap. Acts as a genome stabilization factor that prevents flaps from equilibrating into structures that lead to duplications and deletions. Also possesses 5'-3' exonuclease activity on nicked or gapped double-stranded DNA, and exhibits RNase H activity. Also involved in replication and repair of rDNA and in repairing mitochondrial DNA. The protein is Flap endonuclease 1 of Drosophila willistoni (Fruit fly).